The sequence spans 464 residues: ATP synthase subunit beta (464 aa).

154 to 161 lines the ATP pocket; the sequence is GGAGVGKT.

Belongs to the ATPase alpha/beta chains family. In terms of assembly, F-type ATPases have 2 components, CF(1) - the catalytic core - and CF(0) - the membrane proton channel. CF(1) has five subunits: alpha(3), beta(3), gamma(1), delta(1), epsilon(1). CF(0) has three main subunits: a(1), b(2) and c(9-12). The alpha and beta chains form an alternating ring which encloses part of the gamma chain. CF(1) is attached to CF(0) by a central stalk formed by the gamma and epsilon chains, while a peripheral stalk is formed by the delta and b chains.

It localises to the cell inner membrane. The catalysed reaction is ATP + H2O + 4 H(+)(in) = ADP + phosphate + 5 H(+)(out). Functionally, produces ATP from ADP in the presence of a proton gradient across the membrane. The catalytic sites are hosted primarily by the beta subunits. This chain is ATP synthase subunit beta, found in Blochmanniella floridana.